The primary structure comprises 346 residues: MEKLARKQVQELTPYLSARRIGGTGDVWLNANESPFNNEYKTDFARLNRYSECQPKALISAYAAYAGVKPEQTLTSRGADEGIELLVRAFCEPGQDAILYCPPTYGMYAISAETIGVERKTVPLTSDWQLDLAGIESNLDNVKLVFVCSPNNPTGNLVKREDIVSLLEMTKDRAIVVMDEAYIDFCPEASTVDLLAQYPNLAILRTLSKAFALAGLRCGFTLANEELINVLLKVIAPYPVPVPVAEIAVQALSEAGLARAKFQVLDLNANRAYLQVGLSMIPGLQVFEGWGNYLLVKFPDGDALFKAAWDTGIILRNSPIENCVRISVGNRDECEKTLGFIRNYYS.

Residue Lys209 is modified to N6-(pyridoxal phosphate)lysine.

This sequence belongs to the class-II pyridoxal-phosphate-dependent aminotransferase family. Histidinol-phosphate aminotransferase subfamily. Homodimer. Pyridoxal 5'-phosphate serves as cofactor.

The enzyme catalyses L-histidinol phosphate + 2-oxoglutarate = 3-(imidazol-4-yl)-2-oxopropyl phosphate + L-glutamate. The protein operates within amino-acid biosynthesis; L-histidine biosynthesis; L-histidine from 5-phospho-alpha-D-ribose 1-diphosphate: step 7/9. This chain is Histidinol-phosphate aminotransferase, found in Vibrio parahaemolyticus serotype O3:K6 (strain RIMD 2210633).